A 335-amino-acid chain; its full sequence is 4-hydroxy-3-methylbut-2-enyl diphosphate reductase 2 (335 aa).

[4Fe-4S] cluster is bound at residue Cys37. The (2E)-4-hydroxy-3-methylbut-2-enyl diphosphate site is built by His66 and His99. Dimethylallyl diphosphate-binding residues include His66 and His99. His66 and His99 together coordinate isopentenyl diphosphate. Cys121 lines the [4Fe-4S] cluster pocket. His149 contacts (2E)-4-hydroxy-3-methylbut-2-enyl diphosphate. His149 provides a ligand contact to dimethylallyl diphosphate. Position 149 (His149) interacts with isopentenyl diphosphate. The active-site Proton donor is Glu151. Thr189 serves as a coordination point for (2E)-4-hydroxy-3-methylbut-2-enyl diphosphate. A [4Fe-4S] cluster-binding site is contributed by Cys219. Residues Ser247, Ser248, Asn249, and Ser292 each coordinate (2E)-4-hydroxy-3-methylbut-2-enyl diphosphate. 4 residues coordinate dimethylallyl diphosphate: Ser247, Ser248, Asn249, and Ser292. Isopentenyl diphosphate is bound by residues Ser247, Ser248, Asn249, and Ser292.

This sequence belongs to the IspH family. Requires [4Fe-4S] cluster as cofactor.

The enzyme catalyses isopentenyl diphosphate + 2 oxidized [2Fe-2S]-[ferredoxin] + H2O = (2E)-4-hydroxy-3-methylbut-2-enyl diphosphate + 2 reduced [2Fe-2S]-[ferredoxin] + 2 H(+). It carries out the reaction dimethylallyl diphosphate + 2 oxidized [2Fe-2S]-[ferredoxin] + H2O = (2E)-4-hydroxy-3-methylbut-2-enyl diphosphate + 2 reduced [2Fe-2S]-[ferredoxin] + 2 H(+). Its pathway is isoprenoid biosynthesis; dimethylallyl diphosphate biosynthesis; dimethylallyl diphosphate from (2E)-4-hydroxy-3-methylbutenyl diphosphate: step 1/1. It functions in the pathway isoprenoid biosynthesis; isopentenyl diphosphate biosynthesis via DXP pathway; isopentenyl diphosphate from 1-deoxy-D-xylulose 5-phosphate: step 6/6. Its function is as follows. Catalyzes the conversion of 1-hydroxy-2-methyl-2-(E)-butenyl 4-diphosphate (HMBPP) into a mixture of isopentenyl diphosphate (IPP) and dimethylallyl diphosphate (DMAPP). Acts in the terminal step of the DOXP/MEP pathway for isoprenoid precursor biosynthesis. Has a higher activity compared with LytB2. Is essential for M.tuberculosis growth in vitro. This chain is 4-hydroxy-3-methylbut-2-enyl diphosphate reductase 2, found in Mycobacterium tuberculosis (strain ATCC 25618 / H37Rv).